A 1187-amino-acid chain; its full sequence is Myelin transcription factor 1-like protein (1187 aa).

The segment at 1-22 is disordered; the sequence is MDVDSEEKRHRTRSKGVRVPVE. The segment at 22–65 adopts a CCHHC-type 1 zinc-finger fold; that stretch reads EPAIQELFSCPTPGCDGSGHVSGKYARHRSVYGCPLAKKRKTQD. Positions 31, 36, 49, and 55 each coordinate Zn(2+). Disordered regions lie at residues 56 to 178 and 221 to 248; these read PLAK…QMSC and RTES…GRKS. Over residues 89–172 the composition is skewed to acidic residues; the sequence is ECYESDGTED…EEEEEEEENE (84 aa). Ser-251 carries the phosphoserine modification. Disordered stretches follow at residues 343 to 422 and 450 to 514; these read SETN…DRSE and REKM…GCDG. A compositionally biased stretch (polar residues) spans 344–358; that stretch reads ETNPQDRSQPPNMSV. Basic and acidic residues-rich tracts occupy residues 362–377, 401–412, 450–488, and 496–506; these read VRQE…DRSY, AKEDGCHERDDD, REKM…DSHV, and DPSRTEKRESK. CCHHC-type zinc fingers lie at residues 498 to 541 and 542 to 585; these read SRTE…PPEI and LAMH…KLAK. Residues Cys-507, Cys-512, His-525, Cys-531, Cys-551, Cys-556, His-569, and Cys-575 each coordinate Zn(2+). Residues 686-710 form a disordered region; sequence ASPSSSTTSSYAPSSSSNLSCGGGS. 3 consecutive CCHHC-type zinc fingers follow at residues 897 to 940, 946 to 989, and 999 to 1042; these read LATS…GIRI, DKED…QKDG, and KSVK…MKKA. Zn(2+)-binding residues include Cys-906, Cys-911, His-924, Cys-930, Cys-955, Cys-960, His-973, Cys-979, Cys-1008, Cys-1013, His-1026, and Cys-1032. Residues 1058–1132 adopt a coiled-coil conformation; sequence NGIENDEEIK…ANLSQSLIHS (75 aa).

This sequence belongs to the MYT1 family. Interacts with SIN3B. In terms of tissue distribution, brain.

It is found in the nucleus. It localises to the chromosome. Transcription factor that plays a key role in neuronal differentiation by specifically repressing expression of non-neuronal genes during neuron differentiation. In contrast to other transcription repressors that inhibit specific lineages, mediates repression of multiple differentiation programs. Also represses expression of negative regulators of neurogenesis, such as members of the Notch signaling pathway, including HES1. The combination of three transcription factors, ASCL1, POU3F2/BRN2 and MYT1L, is sufficient to reprogram fibroblasts and other somatic cells into induced neuronal (iN) cells in vitro. Directly binds the 5'-AAGTT-3' core motif present on the promoter of target genes and represses transcription by recruiting a multiprotein complex containing SIN3B. The 5'-AAGTT-3' core motif is absent from the promoter of neural genes. This is Myelin transcription factor 1-like protein from Mus musculus (Mouse).